We begin with the raw amino-acid sequence, 2293 residues long: Protein Ycf2 B (2293 aa).

1647–1654 lines the ATP pocket; the sequence is GSIGTGRS.

Belongs to the Ycf2 family.

Its subcellular location is the plastid. The protein resides in the chloroplast stroma. Probable ATPase of unknown function. Its presence in a non-photosynthetic plant (Epifagus virginiana) and experiments in tobacco indicate that it has an essential function which is probably not related to photosynthesis. The sequence is that of Protein Ycf2 B from Crucihimalaya wallichii (Rock-cress).